Consider the following 160-residue polypeptide: Surface-adhesin protein E (160 aa).

A signal peptide spans 1 to 15 (MKKIILTLSLGLLTA). Residue C16 is the site of N-palmitoyl cysteine attachment. C16 carries the S-diacylglycerol cysteine lipid modification.

The protein localises to the cell outer membrane. It localises to the cell surface. In terms of biological role, acts as a multifunctional adhesin involved in direct interactions with host epithelial cells and host proteins. This Haemophilus influenzae (strain ATCC 51907 / DSM 11121 / KW20 / Rd) protein is Surface-adhesin protein E (pe).